We begin with the raw amino-acid sequence, 911 residues long: Pesticidal crystal protein Cry1Af (911 aa).

This sequence belongs to the delta endotoxin family.

Its function is as follows. Promotes colloidosmotic lysis by binding to the midgut epithelial cells of both dipteran and lepidopteran larvae. This chain is Pesticidal crystal protein Cry1Af (cry1Af), found in Bacillus thuringiensis.